A 274-amino-acid polypeptide reads, in one-letter code: MTAPNIEMIASSLRNCSLNGGGGGGGGRRRGRRAAAAEGSDDSEGVTVELNSEVALPYHWEQCLDIRTGQVYYINWEDGTRTTIDPRSSSAYSPSPASRSASSSSRRCSRARGRGGGGGAAAAASTTTSSGYTSVSSVGAVTAAAAAWRSHDSSGHGYGYGYGYGSYGYGYGYDGRDGDDEESSSSSSSSSSSSSSASSSRGSAVSSTLSSFSPTDESASGAGSGYAVGDNGAHVLVAAGCRACFMYFMVPKTADVCPKCGSSGLLHLSRNGYV.

A disordered region spans residues 17 to 44 (SLNGGGGGGGGRRRGRRAAAAEGSDDSE). Residues 47–52 (TVELNS) carry the EAR motif. In terms of domain architecture, WW spans 54–88 (VALPYHWEQCLDIRTGQVYYINWEDGTRTTIDPRS). Disordered stretches follow at residues 83–133 (TIDP…SGYT) and 175–216 (GRDG…SPTD). 3 stretches are compositionally biased toward low complexity: residues 87 to 106 (RSSSAYSPSPASRSASSSSR), 121 to 133 (AAAASTTTSSGYT), and 184 to 207 (SSSSSSSSSSSSSASSSRGSAVSS).

In terms of assembly, binds to HDG1.

In terms of biological role, negatively regulates the cuticle development probably by interacting with the HD-ZIP IV transcription factor HDG1. This Oryza sativa subsp. japonica (Rice) protein is Protein CURLY FLAG LEAF 1.